The chain runs to 242 residues: MKILLIGYGAMNQRVARLAEEQGHEITGIIVPDKNNNYPYPTFEHISDAEGADVAIDFSNPELLLPLLDEDFELPLVVATTGEKEKITEKLEELSQKMPVFFSANMSYGIHVLTKLLEVAVPLLEGYDIELIEAHHNKKVDAPSGTLVKLYDVIKELKDNVNPVYDRHEKNEKRQPDDIGISAIRGGTIVGEHDVLFAGVDETIELTHRAQSKDIFANGALKAAERLVTKPKGYYTFDNINN.

Residues Ala-79–Thr-81 and Ser-103–Met-106 each bind NAD(+). His-135 acts as the Proton donor/acceptor in catalysis. His-136 is a binding site for (S)-2,3,4,5-tetrahydrodipicolinate. The Proton donor role is filled by Lys-139. A (S)-2,3,4,5-tetrahydrodipicolinate-binding site is contributed by Gly-145–Thr-146.

This sequence belongs to the DapB family.

Its subcellular location is the cytoplasm. It carries out the reaction (S)-2,3,4,5-tetrahydrodipicolinate + NAD(+) + H2O = (2S,4S)-4-hydroxy-2,3,4,5-tetrahydrodipicolinate + NADH + H(+). It catalyses the reaction (S)-2,3,4,5-tetrahydrodipicolinate + NADP(+) + H2O = (2S,4S)-4-hydroxy-2,3,4,5-tetrahydrodipicolinate + NADPH + H(+). It participates in amino-acid biosynthesis; L-lysine biosynthesis via DAP pathway; (S)-tetrahydrodipicolinate from L-aspartate: step 4/4. Its function is as follows. Catalyzes the conversion of 4-hydroxy-tetrahydrodipicolinate (HTPA) to tetrahydrodipicolinate. The sequence is that of 4-hydroxy-tetrahydrodipicolinate reductase from Staphylococcus carnosus (strain TM300).